A 769-amino-acid chain; its full sequence is 5-methyltetrahydropteroyltriglutamate--homocysteine methyltransferase (769 aa).

5-methyltetrahydropteroyltri-L-glutamate is bound by residues 16-19 (RELK) and Lys121. The tract at residues 415–450 (SMTERDSPHSSRSPLQREALDLPTLPTTTIGSFPQT) is disordered. The span at 439-449 (LPTTTIGSFPQ) shows a compositional bias: polar residues. L-homocysteine is bound by residues 444-446 (IGS) and Glu497. L-methionine is bound by residues 444 to 446 (IGS) and Glu497. 5-methyltetrahydropteroyltri-L-glutamate contacts are provided by residues 528–529 (RC) and Trp574. Asp612 is a binding site for L-homocysteine. L-methionine is bound at residue Asp612. Glu618 lines the 5-methyltetrahydropteroyltri-L-glutamate pocket. Positions 654, 656, and 678 each coordinate Zn(2+). His707 serves as the catalytic Proton donor. Residue Cys739 participates in Zn(2+) binding.

The protein belongs to the vitamin-B12 independent methionine synthase family. Zn(2+) is required as a cofactor.

The catalysed reaction is 5-methyltetrahydropteroyltri-L-glutamate + L-homocysteine = tetrahydropteroyltri-L-glutamate + L-methionine. It participates in amino-acid biosynthesis; L-methionine biosynthesis via de novo pathway; L-methionine from L-homocysteine (MetE route): step 1/1. Functionally, catalyzes the transfer of a methyl group from 5-methyltetrahydrofolate to homocysteine resulting in methionine formation. This Salinibacter ruber (strain DSM 13855 / M31) protein is 5-methyltetrahydropteroyltriglutamate--homocysteine methyltransferase.